Consider the following 125-residue polypeptide: Small ribosomal subunit protein uS12 (125 aa).

The residue at position 89 (Asp89) is a 3-methylthioaspartic acid.

The protein belongs to the universal ribosomal protein uS12 family. Part of the 30S ribosomal subunit. Contacts proteins S8 and S17. May interact with IF1 in the 30S initiation complex.

With S4 and S5 plays an important role in translational accuracy. Its function is as follows. Interacts with and stabilizes bases of the 16S rRNA that are involved in tRNA selection in the A site and with the mRNA backbone. Located at the interface of the 30S and 50S subunits, it traverses the body of the 30S subunit contacting proteins on the other side and probably holding the rRNA structure together. The combined cluster of proteins S8, S12 and S17 appears to hold together the shoulder and platform of the 30S subunit. The chain is Small ribosomal subunit protein uS12 from Clostridium botulinum (strain Alaska E43 / Type E3).